The primary structure comprises 419 residues: UDP-N-acetylglucosamine 1-carboxyvinyltransferase (419 aa).

22-23 provides a ligand contact to phosphoenolpyruvate; sequence KN. R92 is a binding site for UDP-N-acetyl-alpha-D-glucosamine. C116 serves as the catalytic Proton donor. Residue C116 is modified to 2-(S-cysteinyl)pyruvic acid O-phosphothioketal. Residues 121-125, D306, and I328 each bind UDP-N-acetyl-alpha-D-glucosamine; that span reads RPVDQ.

It belongs to the EPSP synthase family. MurA subfamily.

The protein resides in the cytoplasm. It catalyses the reaction phosphoenolpyruvate + UDP-N-acetyl-alpha-D-glucosamine = UDP-N-acetyl-3-O-(1-carboxyvinyl)-alpha-D-glucosamine + phosphate. Its pathway is cell wall biogenesis; peptidoglycan biosynthesis. Cell wall formation. Adds enolpyruvyl to UDP-N-acetylglucosamine. Target for the antibiotic phosphomycin. This is UDP-N-acetylglucosamine 1-carboxyvinyltransferase from Acinetobacter guillouiae (Acinetobacter genomosp. 11).